The following is a 179-amino-acid chain: Large ribosomal subunit protein uL10 (179 aa).

The protein belongs to the universal ribosomal protein uL10 family. In terms of assembly, part of the ribosomal stalk of the 50S ribosomal subunit. The N-terminus interacts with L11 and the large rRNA to form the base of the stalk. The C-terminus forms an elongated spine to which L12 dimers bind in a sequential fashion forming a multimeric L10(L12)X complex.

Its function is as follows. Forms part of the ribosomal stalk, playing a central role in the interaction of the ribosome with GTP-bound translation factors. The chain is Large ribosomal subunit protein uL10 from Kosmotoga olearia (strain ATCC BAA-1733 / DSM 21960 / TBF 19.5.1).